The primary structure comprises 82 residues: Delta-ctenitoxin-Pn2a (82 aa).

Residues 1–17 (MKVAILFLSILVLAVAS) form the signal peptide. Residues 18–34 (ESIEESRDDFAVEELGR) constitute a propeptide that is removed on maturation. Disulfide bonds link Cys37/Cys51, Cys44/Cys57, Cys48/Cys80, Cys50/Cys65, and Cys59/Cys63.

It belongs to the neurotoxin 03 (Tx2) family. 06 subfamily. In terms of tissue distribution, expressed by the venom gland.

It is found in the secreted. Functionally, toxin that is known to potentiate erectile function. It binds voltage-dependently to sodium channels (Nav), inhibits the inactivation of the activated channels and decreases the peak inward current. The toxin delays inactivation of Nav1.2/SCN2A, Nav1.3/SCN3A, Nav1.4/SCN4A and Nav1.8/SCN10A, slows the inactivation process and decreases the sodium peak amplitude of Nav1.5/SCN5A and Nav1.6/SCN8A. In vivo, it enhances erectile function by inducing the release of nictric oxide (NO): it slows the sodium current, leading to depolarization, which leads to an increase in calcium influx (probably via activation of N-type calcium channels) which in turn activates neuronal NO synthase (nNOS/NOS1), inducing nitric oxide (NO) production. In a final step, NO activates soluble guanylate cyclase (GUCY1A1/GUCY1B1) which in turn increases cGMP formation, resulting in penile erection. It is noteworthy that the toxin does not provoke erection by inhibiting phosphodiesterase type 5 (PDE5A), an enzyme that hydrolysis cGMP. In vivo, it also causes scratching, lacrimation, hypersalivation, sweating and agitation followed by spastic paralysis of the anterior and posterior extremities and death at dose levels of 0.79 mg/mouse. It is insecticidal to the larval and adult forms of the house fly. The toxin also improves cavernosal relaxation in different models where erectile dysfunction is observed, such as deoxycorticosterone-acetate (DOCA)-salt hypertensive rats, mice models for type-1 diabetes, as well as elderly rats. The sequence is that of Delta-ctenitoxin-Pn2a from Phoneutria nigriventer (Brazilian armed spider).